The sequence spans 195 residues: dTTP/UTP pyrophosphatase (195 aa).

Residue Asp77 is the Proton acceptor of the active site.

The protein belongs to the Maf family. YhdE subfamily. Requires a divalent metal cation as cofactor.

Its subcellular location is the cytoplasm. The catalysed reaction is dTTP + H2O = dTMP + diphosphate + H(+). The enzyme catalyses UTP + H2O = UMP + diphosphate + H(+). Nucleoside triphosphate pyrophosphatase that hydrolyzes dTTP and UTP. May have a dual role in cell division arrest and in preventing the incorporation of modified nucleotides into cellular nucleic acids. In Flavobacterium psychrophilum (strain ATCC 49511 / DSM 21280 / CIP 103535 / JIP02/86), this protein is dTTP/UTP pyrophosphatase.